The primary structure comprises 203 residues: B-cell CLL/lymphoma 7 protein family member B-A (203 aa).

2 disordered regions span residues lysine 55–aspartate 80 and serine 94–glutamate 148. Residues alanine 109–serine 129 are compositionally biased toward low complexity.

It belongs to the BCL7 family.

This is B-cell CLL/lymphoma 7 protein family member B-A (bcl7ba) from Danio rerio (Zebrafish).